The following is a 322-amino-acid chain: Epiphycan (322 aa).

Positions 1-19 (MKTLAGLVLGLVIFDAAVT) are cleaved as a signal peptide. An O-linked (GalNAc...) threonine glycan is attached at Thr-60. The O-linked (Xyl...) (dermatan sulfate) serine glycan is linked to Ser-64. The tract at residues 64 to 101 (SGNRELLTPPPQPEKAQEEEEEEESTPRLIDGSSPQEP) is disordered. Ser-96 carries an O-linked (GalNAc...) serine glycan. In terms of domain architecture, LRRNT spans 106 to 143 (VLGPHTNEDFPTCLLCTCISTTVYCDDHELDAIPPLPK). Cys-118 and Cys-130 form a disulfide bridge. LRR repeat units follow at residues 144–165 (NTAYFYSRFNRIKKINKNDFAS), 168–189 (DLKRIDLTSNLISEIDEDAFRK), 192–213 (QLRELVLRDNKIRQLPELPTTL), 238–258 (DLHHLYLTDNNLDHIPLPLPE), and 259–280 (NLRALHLQNNNILEMHEDTFCN). Cys-279 and Cys-312 form a disulfide bridge. N-linked (GlcNAc...) asparagine glycans are attached at residues Asn-283 and Asn-302. The stretch at 290-310 (ALEDIRLDGNPINLSKTPQAY) is one LRR 6 repeat.

Belongs to the small leucine-rich proteoglycan (SLRP) family. SLRP class III subfamily. The O-linked polysaccharides on Thr-60 and Ser-96 are probably the mucin type linked to GalNAc. There is one glycosaminoglycan chain, known to be dermatan sulfate, and it is probably the O-glycosylation at Ser-64. In terms of tissue distribution, cartilage, ligament, and placenta.

Its subcellular location is the secreted. The protein resides in the extracellular space. It localises to the extracellular matrix. May have a role in bone formation and also in establishing the ordered structure of cartilage through matrix organization. This is Epiphycan (EPYC) from Homo sapiens (Human).